We begin with the raw amino-acid sequence, 427 residues long: Diaminobutyrate--2-oxoglutarate transaminase (427 aa).

The residue at position 264 (Lys264) is an N6-(pyridoxal phosphate)lysine.

Belongs to the class-III pyridoxal-phosphate-dependent aminotransferase family. The cofactor is pyridoxal 5'-phosphate.

The enzyme catalyses L-2,4-diaminobutanoate + 2-oxoglutarate = L-aspartate 4-semialdehyde + L-glutamate. The protein operates within amine and polyamine biosynthesis; ectoine biosynthesis; L-ectoine from L-aspartate 4-semialdehyde: step 1/3. Functionally, catalyzes reversively the conversion of L-aspartate beta-semialdehyde (ASA) to L-2,4-diaminobutyrate (DABA) by transamination with L-glutamate. In Wolinella succinogenes (strain ATCC 29543 / DSM 1740 / CCUG 13145 / JCM 31913 / LMG 7466 / NCTC 11488 / FDC 602W) (Vibrio succinogenes), this protein is Diaminobutyrate--2-oxoglutarate transaminase (ectB).